A 249-amino-acid chain; its full sequence is Homeobox protein TGIF2LX (249 aa).

Disordered stretches follow at residues 1 to 65 (MEAA…GYSP) and 126 to 199 (DPIV…PKKK). The span at 9–27 (AETRSRVEKDSRRAIKDSP) shows a compositional bias: basic and acidic residues. The span at 28-46 (AKTQSPAQDTSIMLRNNAD) shows a compositional bias: polar residues. Residues 55-118 (EHKKKRKGYS…INARRRILPD (64 aa)) constitute a DNA-binding region (homeobox; TALE-type). Residues 159-172 (DNVQSLPLRSSPKG) are compositionally biased toward polar residues.

It belongs to the TALE/TGIF homeobox family.

The protein localises to the nucleus. In terms of biological role, may have a transcription role in testis. This Macaca mulatta (Rhesus macaque) protein is Homeobox protein TGIF2LX (TGIF2LX).